We begin with the raw amino-acid sequence, 436 residues long: GTPase Der (436 aa).

2 EngA-type G domains span residues 4-167 (PTIA…PNEE) and 175-351 (IKFS…QSQN). GTP-binding positions include 10-17 (GRPNVGKS), 57-61 (DTGGI), 119-122 (NKVD), 181-188 (GRPNVGKS), 229-233 (DTAGM), and 294-297 (NKWD). A KH-like domain is found at 352 to 436 (TRIPSAVLND…PIHLIARKRK (85 aa)).

The protein belongs to the TRAFAC class TrmE-Era-EngA-EngB-Septin-like GTPase superfamily. EngA (Der) GTPase family. In terms of assembly, associates with the 50S ribosomal subunit.

GTPase that plays an essential role in the late steps of ribosome biogenesis. The sequence is that of GTPase Der from Streptococcus gordonii (strain Challis / ATCC 35105 / BCRC 15272 / CH1 / DL1 / V288).